The sequence spans 118 residues: Ribonuclease P protein component (118 aa).

This sequence belongs to the RnpA family. In terms of assembly, consists of a catalytic RNA component (M1 or rnpB) and a protein subunit.

It carries out the reaction Endonucleolytic cleavage of RNA, removing 5'-extranucleotides from tRNA precursor.. Its function is as follows. RNaseP catalyzes the removal of the 5'-leader sequence from pre-tRNA to produce the mature 5'-terminus. It can also cleave other RNA substrates such as 4.5S RNA. The protein component plays an auxiliary but essential role in vivo by binding to the 5'-leader sequence and broadening the substrate specificity of the ribozyme. The polypeptide is Ribonuclease P protein component (Enterococcus faecalis (strain ATCC 700802 / V583)).